We begin with the raw amino-acid sequence, 370 residues long: UDP-galactose transporter homolog 1 (370 aa).

A run of 10 helical transmembrane segments spans residues 22–42 (ALTL…WSIL), 62–82 (IIIN…YNYV), 115–135 (CNVL…SPIG), 145–165 (LAYL…HFIF), 175–195 (YLVA…HVTT), 204–224 (TLLG…TNST), 242–262 (LMSL…IIFH), 280–300 (LIDI…IFII), 307–327 (IILI…SVIL), and 333–353 (SWEQ…EAFI).

It belongs to the nucleotide-sugar transporter family. SLC35B subfamily.

It localises to the endoplasmic reticulum membrane. In terms of biological role, may be involved in specific transport of UDP-Gal from the cytosol to the Golgi lumen. Involved in the maintenance of optimal conditions for the folding of secretory pathway proteins in the endoplasmic reticulum. This chain is UDP-galactose transporter homolog 1 (HUT1), found in Candida albicans (strain SC5314 / ATCC MYA-2876) (Yeast).